The sequence spans 136 residues: 1,4-dihydroxy-2-naphthoyl-CoA hydrolase (136 aa).

The Nucleophile or proton acceptor role is filled by E63. Substrate contacts are provided by residues G82, 89-92, and 106-111; these read HVRS and HLGSRH.

It belongs to the thioesterase PaaI family. As to quaternary structure, homotetramer. Dimer of dimers.

The catalysed reaction is 1,4-dihydroxy-2-naphthoyl-CoA + H2O = 1,4-dihydroxy-2-naphthoate + CoA + H(+). It functions in the pathway quinol/quinone metabolism; 1,4-dihydroxy-2-naphthoate biosynthesis; 1,4-dihydroxy-2-naphthoate from chorismate: step 7/7. It participates in quinol/quinone metabolism; menaquinone biosynthesis. Catalyzes the hydrolysis of 1,4-dihydroxy-2-naphthoyl-CoA (DHNA-CoA) to 1,4-dihydroxy-2-naphthoate (DHNA). Also shows significant activity toward a wide range of acyl-CoA thioesters, and minimal activity toward benzoyl-holoEntB. This chain is 1,4-dihydroxy-2-naphthoyl-CoA hydrolase, found in Escherichia coli (strain K12).